Here is a 345-residue protein sequence, read N- to C-terminus: Prenyltransferase ltmC (345 aa).

Residue His112 coordinates substrate. Mg(2+)-binding residues include Asp119 and Asp123. Substrate is bound at residue Arg128. N-linked (GlcNAc...) asparagine glycosylation is present at Asn130. Positions 212, 213, 243, 250, and 260 each coordinate substrate.

The protein belongs to the FPP/GGPP synthase family. It depends on Mg(2+) as a cofactor.

The protein operates within secondary metabolite biosynthesis. Functionally, prenyltransferase; part of the gene cluster that mediates the biosynthesis of lolitrems, indole-diterpene mycotoxins that are potent tremorgens in mammals, and are synthesized by clavicipitaceous fungal endophytes in association with their grass hosts. The geranylgeranyl diphosphate (GGPP) synthase ltmG is proposed to catalyze the first step in lolitrem biosynthesis. LtmG catalyzes a series of iterative condensations of isopentenyl diphosphate (IPP) with dimethylallyl diphosphate (DMAPP), geranyl diphosphate (GPP), and farnesyl diphosphate (FPP), to form GGPP. GGPP then condenses with indole-3-glycerol phosphate to form 3-geranylgeranylindole, an acyclic intermediate, to be incorporated into paxilline. Either ltmG or ltmC could be responsible for this step, as both are putative prenyl transferases. The FAD-dependent monooxygenase ltmM then catalyzes the epoxidation of the two terminal alkenes of the geranylgeranyl moiety, which is subsequently cyclized by ltmB, to paspaline. The cytochrome P450 monooxygenases ltmQ and ltmP can sequentially oxidize paspaline to terpendole E and terpendole F. Alternatively, ltmP converts paspaline to an intermediate which is oxidized by ltmQ to terpendole F. LtmF, ltmK, ltmE and ltmJ appear to be unique to the epichloe endophytes. The prenyltransferase ltmF is involved in the 27-hydroxyl-O-prenylation. The cytochrome P450 monooxygenase ltmK is required for the oxidative acetal ring formation. The multi-functional prenyltransferase ltmE is required for C20- and C21-prenylations of the indole ring of paspalanes and acts together with the cytochrome P450 monooxygenase ltmJ to yield lolitremanes by multiple oxidations and ring closures. The stereoisomer pairs of lolitriol and lolitrem N or lolitrem B and lolitrem F may be attributed to variations in the way in which ring closure can occur under the action of ltmJ. While the major product of this pathway is lolitrem B, the prenyl transferases and cytochrome P450 monooxygenases identified in this pathway have a remarkable versatility in their regio- and stereo-specificities to generate a diverse range of metabolites that are products of a metabolic grid rather than a linear pathway. This chain is Prenyltransferase ltmC, found in Epichloe festucae var. lolii (Neotyphodium lolii).